An 853-amino-acid chain; its full sequence is Protein translocase subunit SecA 1 (853 aa).

ATP-binding positions include Gln85, 103–107 (GEGKT), and Asp492.

Belongs to the SecA family. Monomer and homodimer. Part of the essential Sec protein translocation apparatus which comprises SecA, SecYEG and auxiliary proteins SecDF. Other proteins may also be involved.

It localises to the cell membrane. The protein resides in the cytoplasm. The enzyme catalyses ATP + H2O + cellular proteinSide 1 = ADP + phosphate + cellular proteinSide 2.. Its function is as follows. Part of the Sec protein translocase complex. Interacts with the SecYEG preprotein conducting channel. Has a central role in coupling the hydrolysis of ATP to the transfer of proteins into and across the cell membrane, serving as an ATP-driven molecular motor driving the stepwise translocation of polypeptide chains across the membrane. This chain is Protein translocase subunit SecA 1, found in Corynebacterium diphtheriae (strain ATCC 700971 / NCTC 13129 / Biotype gravis).